A 347-amino-acid chain; its full sequence is 3,4-dihydroxy-2-butanone 4-phosphate synthase (347 aa).

Residues 1–200 (MPLNRVREAI…ISDLIEYRMQ (200 aa)) form a DHBP synthase region. D-ribulose 5-phosphate is bound by residues 27 to 28 (RE), Asp32, 139 to 143 (RTGHT), and Glu163. Glu28 contacts Mg(2+). His142 is a Mg(2+) binding site. Residues 201–347 (NEMLILIKER…IVLQGGPIQL (147 aa)) are GTP cyclohydrolase II-like.

The protein in the N-terminal section; belongs to the DHBP synthase family. In the C-terminal section; belongs to the GTP cyclohydrolase II family. Mg(2+) is required as a cofactor. The cofactor is Mn(2+).

The catalysed reaction is D-ribulose 5-phosphate = (2S)-2-hydroxy-3-oxobutyl phosphate + formate + H(+). The protein operates within cofactor biosynthesis; riboflavin biosynthesis; 2-hydroxy-3-oxobutyl phosphate from D-ribulose 5-phosphate: step 1/1. Functionally, catalyzes the conversion of D-ribulose 5-phosphate to formate and 3,4-dihydroxy-2-butanone 4-phosphate. This is 3,4-dihydroxy-2-butanone 4-phosphate synthase (ribB) from Wolinella succinogenes (strain ATCC 29543 / DSM 1740 / CCUG 13145 / JCM 31913 / LMG 7466 / NCTC 11488 / FDC 602W) (Vibrio succinogenes).